The chain runs to 442 residues: F-box/FBD/LRR-repeat protein At3g14710 (442 aa).

In terms of domain architecture, F-box spans 26 to 73 (DKFSSLLESVVSIILSQLPTAEAVSTSVLSKSWKNIWTNITDLHFDDT). LRR repeat units follow at residues 126-147 (NLQRLVVTCNDLEIISFSSLFP), 151-172 (SLVELRLRTKSILDISAPAILP), and 173-194 (NLKFLSLEDARIFNMSSVSKNL). Positions 370 to 414 (VESPDCVTTMLKVLQIRNFKPNRLQISVLRYVLDNAEILGSVILS) constitute an FBD domain.

The sequence is that of F-box/FBD/LRR-repeat protein At3g14710 from Arabidopsis thaliana (Mouse-ear cress).